The following is a 968-amino-acid chain: Chaperone protein ClpB3, chloroplastic (968 aa).

Residues 1-67 (MATATTTATA…RLDHRPFVVR (67 aa)) constitute a chloroplast transit peptide. The Clp R domain maps to 78–222 (TQQEFTEMAW…KSAIESIRGK (145 aa)). Repeat regions lie at residues 82–147 (FTEM…IQRQ) and 159–222 (LGRD…IRGK). Residues 237–485 (LEKYGKDLTA…KLKMEITSKP (249 aa)) are i. Residue 282-289 (GEPGVGKT) participates in ATP binding. The stretch at 488–606 (LDELDRSVIK…NEYLSSGKSM (119 aa)) forms a coiled coil. Positions 611–802 (VLGSDIAEIV…VIIMTSNVGS (192 aa)) are II. 685-692 (GPTGVGKT) is a binding site for ATP.

It belongs to the ClpA/ClpB family.

Its subcellular location is the plastid. The protein localises to the chloroplast. In terms of biological role, molecular chaperone essential for chloroplast development and seedling viability. Mediates internal thylakoid membrane formation and confers thermotolerance to chloroplasts during heat stress. This Arabidopsis thaliana (Mouse-ear cress) protein is Chaperone protein ClpB3, chloroplastic (CLPB3).